Consider the following 670-residue polypeptide: Probable membrane-anchored ferredoxin csal_0991 (670 aa).

5 helical membrane passes run 2–22 (LDILLPILIFSALALAAIGAV), 68–90 (VATAGGFVAAMGLAIVVHGLGLA), 94–113 (LGWLLLAASATMFAGSLFVA), 135–155 (LMAFSLGIFVVTLPAVGVLPA), and 159–179 (GWLVALVLAAVVAWGLAELVF). 2 consecutive 4Fe-4S ferredoxin-type domains span residues 241–271 (WNQLLGFDACVQCGRCEAVCPAFAAGQPLNP) and 316–347 (GTALVDAETLWSCTTCRACVEECPMMIEHVDA). [4Fe-4S] cluster is bound by residues Cys250, Cys253, Cys256, Cys260, Cys328, Cys331, Cys334, and Cys338. Residues 648–670 (NTPPATPASHDTAASQATEEVLS) form a disordered region. Residues 659–670 (TAASQATEEVLS) show a composition bias toward polar residues.

[4Fe-4S] cluster serves as cofactor.

The protein resides in the cell inner membrane. In terms of biological role, participates in the electron transfer process during N,N-dimethylglycine (DMG) degradation to sarcosine. Probably transfers the electrons from N,N-dimethylglycine/sarcosine dehydrogenase (DMGDH) to the electron transfer flavoprotein (ETF) EtfA-EtfB. The sequence is that of Probable membrane-anchored ferredoxin csal_0991 from Chromohalobacter salexigens (strain ATCC BAA-138 / DSM 3043 / CIP 106854 / NCIMB 13768 / 1H11).